We begin with the raw amino-acid sequence, 207 residues long: uncharacterized protein (207 aa).

The next 5 helical transmembrane spans lie at 28–48 (IAVLLPLIEAFLPFLPLIVFV), 59–79 (EGFILSWAGSTAGSILVFLIV), 112–132 (MFLLLCFPFTPSAAVNVVAGL), 140–160 (FILAAASGKLVMIFMISFIGY), and 165–185 (LITQPIRTVIAVLVITVLWYV).

It is found in the cell membrane. This is an uncharacterized protein from Bacillus subtilis (strain 168).